A 282-amino-acid polypeptide reads, in one-letter code: Probable endonuclease 4 (282 aa).

9 residues coordinate Zn(2+): H69, H109, E145, D179, H182, H216, D229, H231, and E261.

This sequence belongs to the AP endonuclease 2 family. Zn(2+) serves as cofactor.

It carries out the reaction Endonucleolytic cleavage to 5'-phosphooligonucleotide end-products.. Its function is as follows. Endonuclease IV plays a role in DNA repair. It cleaves phosphodiester bonds at apurinic or apyrimidinic (AP) sites, generating a 3'-hydroxyl group and a 5'-terminal sugar phosphate. The chain is Probable endonuclease 4 from Campylobacter fetus subsp. fetus (strain 82-40).